We begin with the raw amino-acid sequence, 172 residues long: Ribosome maturation factor RimM (172 aa).

Residues 96-168 (DGEFYYHEII…RVDVEIPEGL (73 aa)) enclose the PRC barrel domain.

Belongs to the RimM family. Binds ribosomal protein uS19.

Its subcellular location is the cytoplasm. Its function is as follows. An accessory protein needed during the final step in the assembly of 30S ribosomal subunit, possibly for assembly of the head region. Essential for efficient processing of 16S rRNA. May be needed both before and after RbfA during the maturation of 16S rRNA. It has affinity for free ribosomal 30S subunits but not for 70S ribosomes. In Streptococcus sanguinis (strain SK36), this protein is Ribosome maturation factor RimM.